The chain runs to 75 residues: UPF0352 protein YejL (75 aa).

This sequence belongs to the UPF0352 family.

In Escherichia coli O127:H6 (strain E2348/69 / EPEC), this protein is UPF0352 protein YejL.